A 706-amino-acid polypeptide reads, in one-letter code: MSLTKIPENVQGAVSIDPWLEPFADVLSERRYLADKWLYDIKHATPDGSEQSLVDFARNAYKTYGLHANQQTKEIVYREWAPNAQRAFLVGEFNNWNEESHEMKHKDEFGVFSITLAPLENGDFAIPHDSKIKVMFVLPDGSKVYRIPAWITRATQPSKETAQKYGPTYEGRFWNPPNSYQFKHQRPKFNLANDSIKIYEAHIGISSPEPKVASYKEFTQNVLPRIKHLGYDAIQLMAIMEHAYYASFGYQVTNFFAISSRYGTPEDLKELIDTAHSMGILVLLDVIHSHASKNSEDGLNMFDGSDHQYFHSLTSGRGEHPLWDSRLFNYGSFEVQRFLLANLAYYIDVYQFDGFRFDGVTSMLYLHHGVGAGGAFSGDYNEYLSRDRSGVDHEALAYLMLANDLVHDLLPESAVTIAEDVSGYPTLCLPRTAGGGGFDYRLAMALPDMWIKLLKTKQDDDWDMGHIVHTLTNRRHGEKVVAYCESHDQALVGDKTLAFWLMDAAMYTDMTVLKEPTLVIDRGIALHKMIRLITHSLGGEAYLNFEGNEFGHPEWLDFPRVGNNDSYHYARRQFNLVDDDLLRYRHLNEFDAAMQNCESKHQWLNTPQAYVSLKHEVDKVIAFERNGHLFVFNFHPTQSFTDYRIGVDVAGTYKIVLNTDRAEFGGHNRIDEAQEFFTTDLEWNNRRNFIQVYIPSRTAIVLTRQM.

Trp96 and Lys133 together coordinate (1,4-alpha-D-glucosyl)n. Residue Asp358 is the Nucleophile of the active site. Glu419 functions as the Proton donor in the catalytic mechanism.

It belongs to the glycosyl hydrolase 13 family. GlgB subfamily. As to quaternary structure, monomer.

Its subcellular location is the cytoplasm. The catalysed reaction is Transfers a segment of a (1-&gt;4)-alpha-D-glucan chain to a primary hydroxy group in a similar glucan chain.. Its pathway is glycan biosynthesis; glycogen biosynthesis. Glycogen-branching enzyme participates in the glycogen biosynthetic process along with glycogenin and glycogen synthase. Generates alpha-1,6-glucosidic branches from alpha-1,4-linked glucose chains, to increase solubility of the glycogen polymer. This is 1,4-alpha-glucan-branching enzyme (GLC3) from Candida glabrata (strain ATCC 2001 / BCRC 20586 / JCM 3761 / NBRC 0622 / NRRL Y-65 / CBS 138) (Yeast).